We begin with the raw amino-acid sequence, 67 residues long: Protein AaeX (67 aa).

Transmembrane regions (helical) follow at residues Leu3–Leu23 and Phe43–Ser63.

It belongs to the AaeX family.

The protein localises to the cell membrane. The protein is Protein AaeX of Cronobacter sakazakii (strain ATCC BAA-894) (Enterobacter sakazakii).